Here is a 172-residue protein sequence, read N- to C-terminus: 3-hydroxydecanoyl-[acyl-carrier-protein] dehydratase (172 aa).

The active site involves histidine 70.

Belongs to the thioester dehydratase family. FabA subfamily. Homodimer.

Its subcellular location is the cytoplasm. The enzyme catalyses a (3R)-hydroxyacyl-[ACP] = a (2E)-enoyl-[ACP] + H2O. The catalysed reaction is (3R)-hydroxydecanoyl-[ACP] = (2E)-decenoyl-[ACP] + H2O. It catalyses the reaction (2E)-decenoyl-[ACP] = (3Z)-decenoyl-[ACP]. It participates in lipid metabolism; fatty acid biosynthesis. In terms of biological role, necessary for the introduction of cis unsaturation into fatty acids. Catalyzes the dehydration of (3R)-3-hydroxydecanoyl-ACP to E-(2)-decenoyl-ACP and then its isomerization to Z-(3)-decenoyl-ACP. Can catalyze the dehydratase reaction for beta-hydroxyacyl-ACPs with saturated chain lengths up to 16:0, being most active on intermediate chain length. This chain is 3-hydroxydecanoyl-[acyl-carrier-protein] dehydratase, found in Xylella fastidiosa (strain M12).